Reading from the N-terminus, the 470-residue chain is Argininosuccinate lyase (470 aa).

The protein belongs to the lyase 1 family. Argininosuccinate lyase subfamily.

The protein localises to the cytoplasm. The enzyme catalyses 2-(N(omega)-L-arginino)succinate = fumarate + L-arginine. The protein operates within amino-acid biosynthesis; L-arginine biosynthesis; L-arginine from L-ornithine and carbamoyl phosphate: step 3/3. The sequence is that of Argininosuccinate lyase from Bordetella avium (strain 197N).